A 156-amino-acid polypeptide reads, in one-letter code: D-aminoacyl-tRNA deacylase (156 aa).

The Gly-cisPro motif, important for rejection of L-amino acids motif lies at 137–138; sequence GP.

It belongs to the DTD family. In terms of assembly, homodimer.

The protein resides in the cytoplasm. The catalysed reaction is glycyl-tRNA(Ala) + H2O = tRNA(Ala) + glycine + H(+). It catalyses the reaction a D-aminoacyl-tRNA + H2O = a tRNA + a D-alpha-amino acid + H(+). Its function is as follows. An aminoacyl-tRNA editing enzyme that deacylates mischarged D-aminoacyl-tRNAs. Also deacylates mischarged glycyl-tRNA(Ala), protecting cells against glycine mischarging by AlaRS. Acts via tRNA-based rather than protein-based catalysis; rejects L-amino acids rather than detecting D-amino acids in the active site. By recycling D-aminoacyl-tRNA to D-amino acids and free tRNA molecules, this enzyme counteracts the toxicity associated with the formation of D-aminoacyl-tRNA entities in vivo and helps enforce protein L-homochirality. The sequence is that of D-aminoacyl-tRNA deacylase from Ruegeria sp. (strain TM1040) (Silicibacter sp.).